Consider the following 153-residue polypeptide: SKP1-like protein 9 (153 aa).

Residues 95-153 (IKAANYLNIKSLFDLACQTVAEIIKGNTPEQIREFFNIENDLTPEEEAAIRRENKWAFE) are interaction with the F-box domain of F-box proteins.

This sequence belongs to the SKP1 family. As to quaternary structure, part of a SCF (SKP1-cullin-F-box) protein ligase complex. Interacts with CPR1/CPR30 and At3g61590. In terms of tissue distribution, expressed in leaves, shoot apical meristem (SAM), roots, flowers and pollen.

Its subcellular location is the nucleus. Its pathway is protein modification; protein ubiquitination. Its function is as follows. Involved in ubiquitination and subsequent proteasomal degradation of target proteins. Together with CUL1, RBX1 and a F-box protein, it forms a SCF E3 ubiquitin ligase complex. The functional specificity of this complex depends on the type of F-box protein. In the SCF complex, it serves as an adapter that links the F-box protein to CUL1. The sequence is that of SKP1-like protein 9 (ASK9) from Arabidopsis thaliana (Mouse-ear cress).